A 328-amino-acid chain; its full sequence is Radiation response metalloprotease IrrE (328 aa).

Positions 1-31 (MPSANVSPPCPSGVRGGGMGPKAKAEASKPH) are disordered. Histidine 118 serves as a coordination point for Zn(2+). The active site involves glutamate 119. Zn(2+) is bound by residues histidine 122 and glutamate 149. 2 disordered regions span residues 217–238 (PREQAASDEDAGPSTEKVLTVR) and 309–328 (RLGRKDSEQADRDEPQDAAQ).

Its function is as follows. Plays a central regulatory role in DNA repair and protection pathways in response to radiation stress. Acts as a site-specific metalloprotease that cleaves and inactivates the repressor protein DdrO, resulting in induced expression of genes required for DNA repair and cell survival after exposure to radiation. Regulates the expression of dozens of proteins from different pathways, including the important DNA repair proteins RecA and PprA. Binds to the promoters of recA and pprA. In Deinococcus radiodurans (strain ATCC 13939 / DSM 20539 / JCM 16871 / CCUG 27074 / LMG 4051 / NBRC 15346 / NCIMB 9279 / VKM B-1422 / R1), this protein is Radiation response metalloprotease IrrE.